The primary structure comprises 481 residues: ATP synthase subunit beta, chloroplastic (481 aa).

Gly-162–Thr-169 is a binding site for ATP.

It belongs to the ATPase alpha/beta chains family. In terms of assembly, F-type ATPases have 2 components, CF(1) - the catalytic core - and CF(0) - the membrane proton channel. CF(1) has five subunits: alpha(3), beta(3), gamma(1), delta(1), epsilon(1). CF(0) has four main subunits: a(1), b(1), b'(1) and c(9-12).

It localises to the plastid. The protein localises to the chloroplast thylakoid membrane. It carries out the reaction ATP + H2O + 4 H(+)(in) = ADP + phosphate + 5 H(+)(out). Produces ATP from ADP in the presence of a proton gradient across the membrane. The catalytic sites are hosted primarily by the beta subunits. This chain is ATP synthase subunit beta, chloroplastic, found in Oltmannsiellopsis viridis (Marine flagellate).